The sequence spans 332 residues: Probable electron transfer flavoprotein subunit alpha, mitochondrial (332 aa).

Position 275 to 303 (275 to 303 (LYIAIGISGAIQHLAGMKDSKVIVAINKD)) interacts with FAD.

It belongs to the ETF alpha-subunit/FixB family. As to quaternary structure, heterodimer of an alpha and a beta subunit. It depends on FAD as a cofactor.

It is found in the mitochondrion matrix. In terms of biological role, the electron transfer flavoprotein serves as a specific electron acceptor for several dehydrogenases, including five acyl-CoA dehydrogenases, glutaryl-CoA and sarcosine dehydrogenase. It transfers the electrons to the main mitochondrial respiratory chain via ETF-ubiquinone oxidoreductase (ETF dehydrogenase). The sequence is that of Probable electron transfer flavoprotein subunit alpha, mitochondrial from Caenorhabditis elegans.